The sequence spans 497 residues: PHD finger protein 10 (497 aa).

The segment covering 1–13 (MTAAGPGAAPSPG) has biased composition (low complexity). Residues 1–61 (MTAAGPGAAP…SSRSCETSSQ (61 aa)) form a disordered region. Phosphoserine occurs at positions 11, 35, and 49. Residues 88-184 (MLQEQVSEYL…HYKEYSQMQQ (97 aa)) form an essential to induce neural progenitor proliferation region. The segment at 88-294 (MLQEQVSEYL…PPLDPELPAL (207 aa)) is SAY. Residue lysine 240 forms a Glycyl lysine isopeptide (Lys-Gly) (interchain with G-Cter in SUMO2) linkage. The residue at position 269 (serine 269) is a Phosphoserine. The span at 284-295 (EPPLDPELPALD) shows a compositional bias: low complexity. A disordered region spans residues 284 to 368 (EPPLDPELPA…RSVLSKSAPG (85 aa)). Positions 291-333 (LPALDSDGDSDDGEDGGGDEKRKNKGTSDSSSGNVSEGDSPPD) are essential to induce neural progenitor proliferation. Serine 296, serine 300, serine 326, and serine 330 each carry phosphoserine. The segment covering 296–307 (SDGDSDDGEDGG) has biased composition (acidic residues). Polar residues predominate over residues 317–327 (TSDSSSGNVSE). Over residues 337 to 358 (DTFHGRQKSKDKMATPRKDGSK) the composition is skewed to basic and acidic residues. A PHD-type 1; degenerate zinc finger spans residues 378–435 (LCGICLKGKESNKKGKAESLIHCSQCDNSGHPSCLDMTMELVSMIKTYPWQCMECKTC). Lysine 384 participates in a covalent cross-link: Glycyl lysine isopeptide (Lys-Gly) (interchain with G-Cter in SUMO2). The segment at 437 to 480 (ICGQPHHEEEMMFCDVCDRGYHTFCVGLGAIPSGRWICDCCQRA) adopts a PHD-type 2; degenerate zinc-finger fold.

This sequence belongs to the SAYP family. In terms of assembly, component of neural progenitors-specific chromatin remodeling complex (npBAF complex) composed of at least, ARID1A/BAF250A or ARID1B/BAF250B, SMARCD1/BAF60A, SMARCD3/BAF60C, SMARCA2/BRM/BAF190B, SMARCA4/BRG1/BAF190A, SMARCB1/BAF47, SMARCC1/BAF155, SMARCE1/BAF57, SMARCC2/BAF170, PHF10/BAF45A, ACTL6A/BAF53A and actin. Interacts with ACTL6A/BAF53A, SMARCA2/BRM/BAF190B, SMARCA4/BRG1/BAF190A and PBRM1/BAF180. In terms of tissue distribution, widely expressed. Expressed selectively in neural stem and progenitor cells (at protein level).

Its subcellular location is the nucleus. In terms of biological role, involved in transcription activity regulation by chromatin remodeling. Belongs to the neural progenitors-specific chromatin remodeling complex (npBAF complex) and is required for the proliferation of neural progenitors. During neural development a switch from a stem/progenitor to a post-mitotic chromatin remodeling mechanism occurs as neurons exit the cell cycle and become committed to their adult state. The transition from proliferating neural stem/progenitor cells to post-mitotic neurons requires a switch in subunit composition of the npBAF and nBAF complexes. As neural progenitors exit mitosis and differentiate into neurons, npBAF complexes which contain ACTL6A/BAF53A and PHF10/BAF45A, are exchanged for homologous alternative ACTL6B/BAF53B and DPF1/BAF45B or DPF3/BAF45C subunits in neuron-specific complexes (nBAF). The npBAF complex is essential for the self-renewal/proliferative capacity of the multipotent neural stem cells. The nBAF complex along with CREST plays a role regulating the activity of genes essential for dendrite growth. The protein is PHD finger protein 10 (Phf10) of Mus musculus (Mouse).